The following is a 354-amino-acid chain: Rhodopsin (354 aa).

Topologically, residues 1–36 (MNGTEGPYFYIPMVNTTGIVRSPYDYPQYYLVNPAA) are extracellular. N-linked (GlcNAc...) asparagine glycans are attached at residues Asn-2 and Asn-15. The chain crosses the membrane as a helical span at residues 37 to 61 (YAALGAYMFFLILVGFPINFLTLYV). Residues 62-73 (TIEHKKLRTPLN) lie on the Cytoplasmic side of the membrane. The helical transmembrane segment at 74–96 (YILLNLAVANLFMVFGGFTTTMY) threads the bilayer. The Extracellular segment spans residues 97 to 110 (TSMHGYFVLGRLGC). An intrachain disulfide couples Cys-110 to Cys-187. A helical transmembrane segment spans residues 111–133 (NLEGFFATLGGEIALWSLVVLAV). The short motif at 134 to 136 (ERW) is the 'Ionic lock' involved in activated form stabilization element. Topologically, residues 134-152 (ERWMVVCKPISNFRFGENH) are cytoplasmic. A helical membrane pass occupies residues 153–173 (AIMGLAMTWLMASACAVPPLV). The Extracellular portion of the chain corresponds to 174–202 (GWSRYIPEGMQCSCGVDYYTRAEGFNNES). N-linked (GlcNAc...) asparagine glycosylation is present at Asn-200. A helical membrane pass occupies residues 203–224 (FVVYMFCCHFMIPLIIVFFCYG). The Cytoplasmic segment spans residues 225–252 (RLLCAVKEAAAAQQESETTQRAEREVTR). A helical membrane pass occupies residues 253 to 274 (MVVIMVIAFLVCWLPYASVAWW). Residues 275 to 286 (IFTHQGSEFGPV) lie on the Extracellular side of the membrane. Residues 287-308 (FMTIPAFFAKSSSIYNPMIYIC) traverse the membrane as a helical segment. Lys-296 carries the post-translational modification N6-(retinylidene)lysine. Topologically, residues 309–354 (MNKQFRNCMITTLCCGKNPFEEEEGASSTASKTEASSVSSSSVSPA) are cytoplasmic. 2 S-palmitoyl cysteine lipidation sites follow: Cys-322 and Cys-323. Residues 329 to 354 (EEEEGASSTASKTEASSVSSSSVSPA) form a disordered region. The segment covering 334–354 (ASSTASKTEASSVSSSSVSPA) has biased composition (low complexity).

The protein belongs to the G-protein coupled receptor 1 family. Opsin subfamily. Post-translationally, phosphorylated on some or all of the serine and threonine residues present in the C-terminal region. Contains one covalently linked retinal chromophore.

Its subcellular location is the membrane. It localises to the cell projection. The protein localises to the cilium. It is found in the photoreceptor outer segment. Its function is as follows. Photoreceptor required for image-forming vision at low light intensity. While most salt water fish species use retinal as chromophore, most freshwater fish use 3-dehydroretinal, or a mixture of retinal and 3-dehydroretinal. Light-induced isomerization of 11-cis to all-trans retinal triggers a conformational change that activates signaling via G-proteins. Subsequent receptor phosphorylation mediates displacement of the bound G-protein alpha subunit by arrestin and terminates signaling. The protein is Rhodopsin (rho) of Mullus surmuletus (Striped red mullet).